Consider the following 4543-residue polypeptide: Low-density lipoprotein receptor-related protein 1 (4543 aa).

The first 21 residues, 1–21, serve as a signal peptide directing secretion; the sequence is MGPLLALAGCLLALLAAPAAR. Residues 22-4419 are Extracellular-facing; that stretch reads ALEAPKTCSP…EFIVGEQQSG (4398 aa). 2 consecutive LDL-receptor class A domains span residues 27–68 and 72–112; these read KTCS…ICPQ and SRCQ…HCRE. 6 disulfides stabilise this stretch: Cys29–Cys42, Cys36–Cys55, Cys49–Cys66, Cys74–Cys87, Cys81–Cys100, and Cys94–Cys110. The EGF-like 1 domain occupies 113–151; the sequence is QLANCTALGCQHHCVPTLSGPACYCNNSFQLAEDRRSCK. Asn116 carries an N-linked (GlcNAc...) asparagine glycan. 6 disulfide bridges follow: Cys117/Cys126, Cys122/Cys135, Cys137/Cys150, Cys156/Cys166, Cys162/Cys175, and Cys177/Cys190. Residue Asn138 is glycosylated (N-linked (GlcNAc...) asparagine). The EGF-like 2; calcium-binding domain occupies 152 to 191; that stretch reads DFDECTVYGTCSQTCTNTEGSYTCSCVEGYLLQPDNRSCK. N-linked (GlcNAc...) asparagine glycosylation is found at Asn187 and Asn276. LDL-receptor class B repeat units lie at residues 294-336, 337-380, and 381-424; these read GNFY…DPAM, GKVF…DLVS, and RLVY…FENY. Asn359 carries N-linked (GlcNAc...) asparagine glycosylation. Asn448 is a glycosylation site (N-linked (GlcNAc...) asparagine). In terms of domain architecture, EGF-like 3 spans 476–522; that stretch reads RSHACEPDQFGKPGGCSDICLLGNSHKSRTCRCRSGFSLGSDGKSCK. Intrachain disulfides connect Cys480/Cys495, Cys491/Cys506, and Cys508/Cys521. LDL-receptor class B repeat units lie at residues 573-615, 616-661, 662-712, and 713-756; these read GFIY…DWMG, NNLY…DPLN, GWMY…DIPA, and KILY…YSSF. N-linked (GlcNAc...) asparagine glycosylation occurs at Asn731. In terms of domain architecture, EGF-like 4 spans 801–841; sequence GSNKCRVNNGGCSSLCLATPRGRQCACAEDQILGADSVTCE. Intrachain disulfides connect Cys805–Cys816, Cys812–Cys825, Cys827–Cys840, Cys852–Cys864, Cys859–Cys877, Cys871–Cys888, Cys893–Cys905, Cys900–Cys918, Cys912–Cys929, Cys934–Cys946, Cys941–Cys959, Cys953–Cys969, Cys974–Cys987, Cys982–Cys1000, Cys994–Cys1009, Cys1013–Cys1025, Cys1020–Cys1038, Cys1032–Cys1049, Cys1060–Cys1073, Cys1067–Cys1086, Cys1080–Cys1095, Cys1102–Cys1116, Cys1110–Cys1129, Cys1123–Cys1138, Cys1143–Cys1157, Cys1150–Cys1170, Cys1164–Cys1180, Cys1183–Cys1194, Cys1190–Cys1204, Cys1206–Cys1219, Cys1225–Cys1235, Cys1231–Cys1244, and Cys1246–Cys1259. 8 consecutive LDL-receptor class A domains span residues 850 to 890, 891 to 931, 932 to 971, 972 to 1011, 1011 to 1051, 1058 to 1097, 1100 to 1140, and 1141 to 1180; these read PQCQ…LCHQ, HTCP…TCSA, RTCS…SCAY, PTCF…GCSH, HSCS…NCTN, GGCH…NCEG, HVCD…NCES, and LVCK…GELC. Ca(2+)-binding residues include Trp869, Asp872, Asp874, Asp876, Asp882, and Glu883. An N-linked (GlcNAc...) asparagine glycan is attached at Asn926. Residues Trp1030, Asp1033, Asp1035, Asp1037, Asp1043, and Glu1044 each contribute to the Ca(2+) site. N-linked (GlcNAc...) asparagine glycosylation occurs at Asn1048. Ca(2+) contacts are provided by Trp1078, Asp1081, Asp1083, Asp1085, Asp1091, and Glu1092. N-linked (GlcNAc...) asparagine glycans are attached at residues Asn1152 and Asn1153. EGF-like domains follow at residues 1181–1220 and 1221–1260; these read DQCS…KTCQ and IQSY…ESCR. N-linked (GlcNAc...) asparagine glycosylation is found at Asn1193 and Asn1216. N-linked (GlcNAc...) asparagine glycosylation is present at Asn1305. 5 LDL-receptor class B repeats span residues 1307 to 1353, 1354 to 1396, 1397 to 1443, 1444 to 1488, and 1489 to 1529; these read SSLY…DWIA, GNIY…DPRY, GILF…DYLE, KRIL…YGGE, and VYWT…YHPS. Asn1509 is a glycosylation site (N-linked (GlcNAc...) asparagine). The EGF-like 7 domain occupies 1534-1577; sequence APNPCEANGGKGPCSHLCLINYNRTLSCACPHLMKLDKDNTTCY. Disulfide bonds link Cys1538–Cys1551, Cys1547–Cys1561, and Cys1563–Cys1576. Asn1556, Asn1573, Asn1614, and Asn1643 each carry an N-linked (GlcNAc...) asparagine glycan. 4 LDL-receptor class B repeats span residues 1625 to 1667, 1668 to 1711, 1712 to 1751, and 1752 to 1796; these read QRIY…DWVS, RNLF…HPLH, GKLY…DYPE, and SKLY…MGDK. N-linked (GlcNAc...) asparagine glycans are attached at residues Asn1721, Asn1731, Asn1761, and Asn1823. Residues 1842 to 1883 enclose the EGF-like 8 domain; it reads GSNPCSVNNGDCSQLCLPTSETSRSCMCTAGYSLKSGQQSCE. 3 cysteine pairs are disulfide-bonded: Cys1846–Cys1857, Cys1853–Cys1867, and Cys1869–Cys1882. Asn1929 carries an N-linked (GlcNAc...) asparagine glycan. 4 LDL-receptor class B repeats span residues 1930–1972, 1973–2015, 2016–2059, and 2060–2103; these read DTIY…DWIA, GNIY…HPEK, GYLF…DYED, and GKLY…FEDY. N-linked (GlcNAc...) asparagine glycans are attached at residues Asn1991 and Asn2044. N-linked (GlcNAc...) asparagine glycans are attached at residues Asn2113 and Asn2123. An EGF-like 9 domain is found at 2151-2191; that stretch reads GTNVCAQNNGGCQQLCLFRGGGRRTCACAHGMLSEDGVSCR. 3 disulfides stabilise this stretch: Cys2155/Cys2166, Cys2162/Cys2176, and Cys2178/Cys2190. LDL-receptor class B repeat units lie at residues 2247 to 2288, 2289 to 2337, 2338 to 2382, 2383 to 2425, and 2426 to 2467; these read NRIF…HRGW, DTLY…DECQ, NLMF…DHRA, EKIY…YGDY, and IFWT…VAND. Residue Asn2466 is glycosylated (N-linked (GlcNAc...) asparagine). The EGF-like 10 domain maps to 2472 to 2512; sequence ELSPCRVNNGGCQDLCLLTPKGHVNCSCRGERVLQEDFTCK. Cystine bridges form between Cys2476-Cys2487, Cys2483-Cys2497, and Cys2499-Cys2511. Residue Asn2496 is glycosylated (N-linked (GlcNAc...) asparagine). N-linked (GlcNAc...) asparagine glycosylation occurs at Asn2515. 7 consecutive LDL-receptor class A domains span residues 2516–2557, 2558–2596, 2597–2635, 2636–2684, 2688–2730, 2730–2769, and 2770–2812; these read STCN…YCSS, RKCK…PCNK, TSCA…NCTA, TDCS…NCPG, PKCP…RQDK, KFCY…RCRL, and TTCS…GCLY. 6 disulfides stabilise this stretch: Cys2518/Cys2531, Cys2526/Cys2544, Cys2538/Cys2555, Cys2560/Cys2572, Cys2567/Cys2585, and Cys2579/Cys2594. A glycan (N-linked (GlcNAc...) asparagine) is linked at Asn2595. Cystine bridges form between Cys2599/Cys2611, Cys2606/Cys2624, Cys2618/Cys2633, Cys2638/Cys2660, Cys2654/Cys2673, Cys2667/Cys2682, Cys2690/Cys2702, Cys2697/Cys2715, Cys2709/Cys2724, Cys2732/Cys2744, Cys2739/Cys2757, Cys2751/Cys2767, Cys2772/Cys2785, Cys2779/Cys2798, and Cys2792/Cys2810. Residues Asn2614 and Asn2632 are each glycosylated (N-linked (GlcNAc...) asparagine). The N-linked (GlcNAc...) asparagine glycan is linked to Asn2813. 3 consecutive LDL-receptor class A domains span residues 2814 to 2853, 2854 to 2897, and 2900 to 2938; these read NTCD…ECEY, PTCG…RCSS, and SKCN…NCFI. Disulfide bonds link Cys2816/Cys2828, Cys2823/Cys2841, Cys2835/Cys2851, Cys2856/Cys2868, Cys2863/Cys2882, Cys2876/Cys2895, Cys2902/Cys2914, Cys2909/Cys2927, Cys2921/Cys2936, Cys2941/Cys2953, Cys2949/Cys2962, Cys2964/Cys2977, Cys2983/Cys2993, Cys2989/Cys3002, and Cys3004/Cys3018. N-linked (GlcNAc...) asparagine glycosylation occurs at Asn2903. One can recognise an EGF-like 11 domain in the interval 2939-2978; that stretch reads NECLNKKLSGCSQECEDLKIGYKCRCRPGFRLKDDGKTCI. The EGF-like 12; calcium-binding domain maps to 2979–3019; the sequence is DIDECSTTYPCSQKCINTLGSYKCLCIEGYKLKPDNPTSCK. N-linked (GlcNAc...) asparagine glycosylation is found at Asn3045 and Asn3086. LDL-receptor class B repeat units follow at residues 3066 to 3110, 3111 to 3153, 3154 to 3197, 3198 to 3240, and 3241 to 3281; these read QMIY…DWVG, GNLY…DVQN, GYLY…DYIN, SRIY…FEDY, and IYWT…YHPY. A glycan (N-linked (GlcNAc...) asparagine) is linked at Asn3176. A glycan (N-linked (GlcNAc...) asparagine) is linked at Asn3261. Residues 3287–3328 enclose the EGF-like 13 domain; sequence PNHPCKTNNAGCSNLCLLSPGGGHKCACPTNFYLGSDGKTCV. 3 disulfides stabilise this stretch: Cys3291/Cys3302, Cys3298/Cys3312, and Cys3314/Cys3327. LDL-receptor class A domains lie at 3329-3368, 3369-3407, 3408-3447, 3448-3488, 3489-3530, 3531-3569, 3570-3608, 3608-3646, 3649-3689, 3690-3730, and 3736-3776; these read SNCT…DCPE, FKCR…NCDI, HVCL…DCPE, VTCA…NCTQ, MTCG…ECDE, RTCE…SCTP, RPCS…DCIP, PRCE…DCGT, RTCP…ECLK, FQCP…DCES, and KSCS…SCSH. A glycan (N-linked (GlcNAc...) asparagine) is linked at Asn3330. Cystine bridges form between Cys3331–Cys3343, Cys3338–Cys3356, Cys3350–Cys3366, Cys3371–Cys3383, Cys3378–Cys3396, Cys3390–Cys3405, Cys3410–Cys3423, Cys3417–Cys3436, Cys3430–Cys3445, Cys3450–Cys3463, Cys3457–Cys3476, Cys3470–Cys3486, Cys3491–Cys3504, Cys3498–Cys3517, Cys3511–Cys3528, Cys3533–Cys3545, Cys3540–Cys3558, Cys3552–Cys3567, Cys3572–Cys3584, Cys3579–Cys3597, Cys3591–Cys3606, Cys3610–Cys3622, Cys3617–Cys3635, Cys3629–Cys3644, Cys3658–Cys3676, Cys3670–Cys3687, Cys3692–Cys3706, Cys3700–Cys3719, Cys3713–Cys3728, Cys3738–Cys3752, Cys3747–Cys3765, Cys3759–Cys3774, Cys3783–Cys3796, Cys3790–Cys3805, Cys3807–Cys3820, Cys3826–Cys3836, Cys3832–Cys3845, and Cys3847–Cys3858. Asn3485 is a glycosylation site (N-linked (GlcNAc...) asparagine). N-linked (GlcNAc...) asparagine glycosylation occurs at Asn3659. 2 consecutive EGF-like domains span residues 3779 to 3821 and 3822 to 3859; these read KSYD…NSCQ and DVNE…NMCK. Residue Asn3786 is glycosylated (N-linked (GlcNAc...) asparagine). Asn3837 is a glycosylation site (N-linked (GlcNAc...) asparagine). LDL-receptor class B repeat units lie at residues 3910–3952, 3969–4011, 4012–4055, and 4056–4100; these read NKIY…THLN, GNIY…DPLR, GTMY…DYHN, and ERLY…FEDY. Positions 3939–3942 match the Recognition site for proteolytical processing motif; it reads RNRR. Asn3952 carries N-linked (GlcNAc...) asparagine glycosylation. Residues Asn4074 and Asn4124 are each glycosylated (N-linked (GlcNAc...) asparagine). 7 EGF-like domains span residues 4146-4182, 4195-4231, 4231-4267, 4267-4303, 4303-4339, 4339-4374, and 4372-4409; these read VTNP…GTCV, TTDT…ERCQ, QINQ…SRCD, DQQV…DRCQ, QYQQ…AQCQ, QDNK…PSCL, and SCLT…MRCE. 21 disulfide bridges follow: Cys4150–Cys4159, Cys4155–Cys4168, Cys4170–Cys4181, Cys4199–Cys4209, Cys4203–Cys4219, Cys4221–Cys4230, Cys4235–Cys4245, Cys4239–Cys4255, Cys4257–Cys4266, Cys4271–Cys4281, Cys4275–Cys4291, Cys4293–Cys4302, Cys4307–Cys4317, Cys4311–Cys4327, Cys4329–Cys4338, Cys4343–Cys4351, Cys4346–Cys4362, Cys4364–Cys4373, Cys4376–Cys4386, Cys4380–Cys4397, and Cys4399–Cys4408. The N-linked (GlcNAc...) asparagine glycan is linked to Asn4178. Asn4278 is a glycosylation site (N-linked (GlcNAc...) asparagine). The helical transmembrane segment at 4420 to 4443 threads the bilayer; sequence RTASIVIPILLLLLLLAVVAFAWY. Topologically, residues 4444–4543 are cytoplasmic; it reads KWRIKGAKGF…ADDDLTDPLA (100 aa). The NPXY motif motif lies at 4501-4506; sequence FTNPVY. The segment at 4522–4543 is disordered; it reads STDEKRELLARGADDDLTDPLA. Positions 4523–4535 are enriched in basic and acidic residues; it reads TDEKRELLARGAD.

The protein belongs to the LDLR family. In terms of assembly, binds vitellogenin and LRPAP1 (alpha 2-macroglobulin). In terms of processing, cleaved into a 85 kDa membrane-spanning subunit (LRP-85) and a 515 kDa large extracellular domain (LRP-515) that remains non-covalently associated. As to expression, somatic.

It is found in the membrane. Its subcellular location is the coated pit. In terms of biological role, endocytic receptor involved in endocytosis and in phagocytosis of apoptotic cells. Involved in cellular lipid homeostasis. Involved in the plasma clearance of chylomicron remnants and activated LRPAP1 (alpha 2-macroglobulin), as well as the local metabolism of complexes between plasminogen activators and their endogenous inhibitors. Acts as an alpha-2-macroglobulin receptor. In Gallus gallus (Chicken), this protein is Low-density lipoprotein receptor-related protein 1 (LRP1).